The sequence spans 293 residues: Phosphatidylserine decarboxylase proenzyme (293 aa).

Catalysis depends on charge relay system; for autoendoproteolytic cleavage activity residues Asp88, His144, and Ser247. Ser247 serves as the catalytic Schiff-base intermediate with substrate; via pyruvic acid; for decarboxylase activity. Position 247 is a pyruvic acid (Ser); by autocatalysis (Ser247).

The protein belongs to the phosphatidylserine decarboxylase family. PSD-B subfamily. Prokaryotic type I sub-subfamily. Heterodimer of a large membrane-associated beta subunit and a small pyruvoyl-containing alpha subunit. The cofactor is pyruvate. Post-translationally, is synthesized initially as an inactive proenzyme. Formation of the active enzyme involves a self-maturation process in which the active site pyruvoyl group is generated from an internal serine residue via an autocatalytic post-translational modification. Two non-identical subunits are generated from the proenzyme in this reaction, and the pyruvate is formed at the N-terminus of the alpha chain, which is derived from the carboxyl end of the proenzyme. The autoendoproteolytic cleavage occurs by a canonical serine protease mechanism, in which the side chain hydroxyl group of the serine supplies its oxygen atom to form the C-terminus of the beta chain, while the remainder of the serine residue undergoes an oxidative deamination to produce ammonia and the pyruvoyl prosthetic group on the alpha chain. During this reaction, the Ser that is part of the protease active site of the proenzyme becomes the pyruvoyl prosthetic group, which constitutes an essential element of the active site of the mature decarboxylase.

It localises to the cell membrane. The catalysed reaction is a 1,2-diacyl-sn-glycero-3-phospho-L-serine + H(+) = a 1,2-diacyl-sn-glycero-3-phosphoethanolamine + CO2. It functions in the pathway phospholipid metabolism; phosphatidylethanolamine biosynthesis; phosphatidylethanolamine from CDP-diacylglycerol: step 2/2. Functionally, catalyzes the formation of phosphatidylethanolamine (PtdEtn) from phosphatidylserine (PtdSer). In Xylella fastidiosa (strain M12), this protein is Phosphatidylserine decarboxylase proenzyme.